A 1088-amino-acid chain; its full sequence is Probable cellulose synthase A catalytic subunit 9 [UDP-forming] (1088 aa).

Position 1 is an N-acetylmethionine (methionine 1). The Cytoplasmic segment spans residues 1–283 (MNTGGRLIAG…RSSRINPYRM (283 aa)). The Zn(2+) site is built by cysteine 39, cysteine 42, cysteine 58, cysteine 61, cysteine 66, cysteine 69, cysteine 81, and cysteine 84. The RING-type; degenerate zinc finger occupies 39–85 (CKICRDEIELTDNGEPFIACNECAFPTCRPCYEYERREGNQACPQCG). The helical transmembrane segment at 284 to 304 (LIFCRLAILGLFFHYRILHPV) threads the bilayer. Topologically, residues 305-306 (ND) are extracellular. Residues 307–327 (AFGLWLTSVICEIWFAVSWIL) form a helical membrane-spanning segment. Over 328 to 871 (DQFPKWYPIE…INSVVYPWTS (544 aa)) the chain is Cytoplasmic. 5 residues coordinate UDP-alpha-D-glucose: serine 366, lysine 372, glutamate 373, aspartate 402, and lysine 543. Aspartate 402 is a catalytic residue. Residues lysine 544 and aspartate 568 each coordinate Mn(2+). Aspartate 788 is a catalytic residue. A helical transmembrane segment spans residues 872-892 (LPLLVYCSLPAICLLTGKFIV). Topologically, residues 893-897 (PEISN) are extracellular. Residues 898–918 (YAGILFLLMFMSIAVTGILEM) traverse the membrane as a helical segment. The Cytoplasmic segment spans residues 919-933 (QWGKIGIDDWWRNEQ). The chain crosses the membrane as a helical span at residues 934–954 (FWVIGGVSSHLFALFQGLLKV). Residues 955-983 (LAGVSTNFTVTSKAADDGEFSELYIFKWT) are Extracellular-facing. The N-linked (GlcNAc...) asparagine glycan is linked to asparagine 961. The chain crosses the membrane as a helical span at residues 984–1004 (SLLIPPTTLLIINIVGVIVGV). The Cytoplasmic segment spans residues 1005–1015 (SDAINNGYDSW). Residues 1016–1036 (GPLFGRLFFALWVIVHLYPFL) form a helical membrane-spanning segment. The Extracellular portion of the chain corresponds to 1037–1045 (KGLLGKQDR). The chain crosses the membrane as a helical span at residues 1046 to 1066 (VPTIILVWSILLASILTLLWV). Residues 1067 to 1088 (RVNPFVSKDGPVLEICGLDCLK) are Cytoplasmic-facing.

Belongs to the glycosyltransferase 2 family. Plant cellulose synthase subfamily. The cofactor is Mn(2+). Requires Zn(2+) as cofactor. As to expression, expressed in young plants, stems and flowers.

The protein localises to the cell membrane. The enzyme catalyses [(1-&gt;4)-beta-D-glucosyl](n) + UDP-alpha-D-glucose = [(1-&gt;4)-beta-D-glucosyl](n+1) + UDP + H(+). It functions in the pathway glycan metabolism; plant cellulose biosynthesis. In terms of biological role, probable catalytic subunit of cellulose synthase terminal complexes ('rosettes'), required for beta-1,4-glucan microfibril crystallization, a major mechanism of the cell wall formation. This Arabidopsis thaliana (Mouse-ear cress) protein is Probable cellulose synthase A catalytic subunit 9 [UDP-forming].